The primary structure comprises 107 residues: Nucleoid-associated protein GDI3467/Gdia_2910 (107 aa).

Belongs to the YbaB/EbfC family. As to quaternary structure, homodimer.

It localises to the cytoplasm. It is found in the nucleoid. In terms of biological role, binds to DNA and alters its conformation. May be involved in regulation of gene expression, nucleoid organization and DNA protection. This is Nucleoid-associated protein GDI3467/Gdia_2910 from Gluconacetobacter diazotrophicus (strain ATCC 49037 / DSM 5601 / CCUG 37298 / CIP 103539 / LMG 7603 / PAl5).